Here is a 354-residue protein sequence, read N- to C-terminus: MNDSAHIDYARYDHIRPLLWTGDALELLDQRKLPFVVEHVRCDSSDAVAEAIHSLAVRGAPAIGIAAGWGVVLAAREIAADSGSEALQKLEPALLRLNAARPTAVNLAWALMRMRRVLAAAGPDWRDVLAREAQAIADEDLAANRHMGALGAGLIAPGSGVLTHCNTGSLATAGFGTALGVIRAGMAQQRISKVFAGETRPWLQGARLTVWELQQDGIDATLIADSAASHLMKSGLVQWVIVGADRICANGDTANKIGSYQLAIAARHHGVKFMVVAPSSTVDMATADGDQIEIEQRDPGELFGVGGVRTVADGIHAWNPVFDVTPGHLIDAIVTERGVIAQPDLARMQAAFGN.

Substrate-binding positions include 58–60 (RGA), R101, and Q204. The active-site Proton donor is D245. Position 255 to 256 (255 to 256 (NK)) interacts with substrate.

The protein belongs to the eIF-2B alpha/beta/delta subunits family. MtnA subfamily.

It carries out the reaction 5-(methylsulfanyl)-alpha-D-ribose 1-phosphate = 5-(methylsulfanyl)-D-ribulose 1-phosphate. It participates in amino-acid biosynthesis; L-methionine biosynthesis via salvage pathway; L-methionine from S-methyl-5-thio-alpha-D-ribose 1-phosphate: step 1/6. Functionally, catalyzes the interconversion of methylthioribose-1-phosphate (MTR-1-P) into methylthioribulose-1-phosphate (MTRu-1-P). In Xanthomonas campestris pv. campestris (strain ATCC 33913 / DSM 3586 / NCPPB 528 / LMG 568 / P 25), this protein is Methylthioribose-1-phosphate isomerase.